Consider the following 284-residue polypeptide: Halorhodopsin (284 aa).

Topologically, residues 1 to 30 (MIETAAADILAGGMVPLEMTQTQIFEAVQS) are extracellular. The helical transmembrane segment at 31 to 56 (DTLLASSLWINIALAGLSILLFVYMG) threads the bilayer. The Cytoplasmic portion of the chain corresponds to 57 to 62 (RNVEDP). The helical transmembrane segment at 63–86 (RAQLIFVATLMVPLVSISSYTGLV) threads the bilayer. Topologically, residues 87–110 (SGLTVSFLEMPAGHALAGQEVLTP) are extracellular. Residues 111 to 132 (WGRYLTWALSTPMILIAVGLLA) form a helical membrane-spanning segment. Residues 133 to 135 (GSN) lie on the Cytoplasmic side of the membrane. Residues 136-159 (TTKLFTAVVADIGMCVTGLAAALT) traverse the membrane as a helical segment. Over 160–162 (TSS) the chain is Extracellular. A helical transmembrane segment spans residues 163–185 (YLLRWVWYAISCAFFVVVLYILL). At 186–197 (AEWAEDAEIAGT) the chain is on the cytoplasmic side. The chain crosses the membrane as a helical span at residues 198 to 221 (ADIFNTLKVLTVVLWLGYPIFWAL). Over 222–230 (GAEGLAVLD) the chain is Extracellular. The helical transmembrane segment at 231–259 (VAITSWAYSGMDIVAKYLFAFLLLRWVVN) threads the bilayer. At K246 the chain carries N6-(retinylidene)lysine. The Cytoplasmic portion of the chain corresponds to 260 to 284 (NERTVADVASGLGSGSRGGAAPADD).

This sequence belongs to the archaeal/bacterial/fungal opsin family.

It is found in the cell membrane. Light-driven chloride pump. In Halobacterium sp. (strain SG1), this protein is Halorhodopsin (hop).